We begin with the raw amino-acid sequence, 530 residues long: Lanosterol 14-alpha demethylase CYP51 (530 aa).

The Lumenal portion of the chain corresponds to 1–20; the sequence is MSATKSIVGEALEYVNIGLS. Residues 21–41 traverse the membrane as a helical segment; sequence HFLALPLAQRISLIIIIPFIY. Residues 42–530 lie on the Cytoplasmic side of the membrane; the sequence is NIVWQLLYSL…WEKRNPEQKI (489 aa). Lysine 116 is covalently cross-linked (Glycyl lysine isopeptide (Lys-Gly) (interchain with G-Cter in ubiquitin)). Tyrosine 126 is a binding site for lanosterol. Glycine 314 lines the itraconazole pocket. Residues lysine 353 and lysine 454 each participate in a glycyl lysine isopeptide (Lys-Gly) (interchain with G-Cter in ubiquitin) cross-link. A Phosphoserine modification is found at serine 458. Cysteine 470 serves as a coordination point for heme.

It belongs to the cytochrome P450 family. As to quaternary structure, interacts with ERG28. The cofactor is heme.

The protein localises to the endoplasmic reticulum membrane. The enzyme catalyses a 14alpha-methyl steroid + 3 reduced [NADPH--hemoprotein reductase] + 3 O2 = a Delta(14) steroid + formate + 3 oxidized [NADPH--hemoprotein reductase] + 4 H2O + 4 H(+). It carries out the reaction a 14alpha-methyl steroid + reduced [NADPH--hemoprotein reductase] + O2 = a 14alpha-hydroxymethyl steroid + oxidized [NADPH--hemoprotein reductase] + H2O + H(+). The catalysed reaction is a 14alpha-hydroxymethyl steroid + reduced [NADPH--hemoprotein reductase] + O2 = a 14alpha-formyl steroid + oxidized [NADPH--hemoprotein reductase] + 2 H2O + H(+). It catalyses the reaction a 14alpha-formyl steroid + reduced [NADPH--hemoprotein reductase] + O2 = a Delta(14) steroid + formate + oxidized [NADPH--hemoprotein reductase] + H2O + 2 H(+). The enzyme catalyses lanosterol + 3 reduced [NADPH--hemoprotein reductase] + 3 O2 = 4,4-dimethyl-5alpha-cholesta-8,14,24-trien-3beta-ol + formate + 3 oxidized [NADPH--hemoprotein reductase] + 4 H2O + 4 H(+). It carries out the reaction lanosterol + reduced [NADPH--hemoprotein reductase] + O2 = 32-hydroxylanosterol + oxidized [NADPH--hemoprotein reductase] + H2O + H(+). The catalysed reaction is 32-hydroxylanosterol + reduced [NADPH--hemoprotein reductase] + O2 = 32-oxolanosterol + oxidized [NADPH--hemoprotein reductase] + 2 H2O + H(+). It catalyses the reaction 32-oxolanosterol + reduced [NADPH--hemoprotein reductase] + O2 = 4,4-dimethyl-5alpha-cholesta-8,14,24-trien-3beta-ol + formate + oxidized [NADPH--hemoprotein reductase] + H2O + 2 H(+). It participates in steroid biosynthesis; zymosterol biosynthesis; zymosterol from lanosterol: step 1/6. Its function is as follows. Sterol 14alpha-demethylase that plays a critical role in the third module of ergosterol biosynthesis pathway, being ergosterol the major sterol component in fungal membranes that participates in a variety of functions. The third module or late pathway involves the ergosterol synthesis itself through consecutive reactions that mainly occur in the endoplasmic reticulum (ER) membrane. Starting from lanosterol (lanosta-8,24-dien-3beta-ol), it catalyzes the three-step oxidative removal of the 14alpha-methyl group (C-32) of the sterol in the form of formate, and converts the sterol to 4,4-dimethyl-5alpha-cholesta-8,14,24-trien-3beta-ol, which is critical for ergosterol biosynthesis. Can demethylate substrates not intrinsic to yeast, such as eburicol (24-methylene-24,25-dihydrolanosterol) at a similar rate to lanosterol, and at a lower rate the 24,25-dihydrolanosterol (DHL) to 4,4-dimethyl-8,14-cholestadien-3beta-ol. The polypeptide is Lanosterol 14-alpha demethylase CYP51 (Saccharomyces cerevisiae (strain ATCC 204508 / S288c) (Baker's yeast)).